Consider the following 563-residue polypeptide: Benzaldehyde lyase (563 aa).

It belongs to the TPP enzyme family. A metal cation is required as a cofactor. The cofactor is thiamine diphosphate.

It carries out the reaction benzoin = 2 benzaldehyde. Functionally, cleavage of benzoin-anisoin acyloin linkage. The polypeptide is Benzaldehyde lyase (bznB) (Pseudomonas fluorescens).